The following is a 1034-amino-acid chain: MDCEKMGKLPVPRTDSVRVAVRVRPFSQREKNSGSQCVISMHARSITIRDPKDAELVKTFTFDLAYWSHDGFQKDEDGVLIPSDPTSKFAGQSDVFHDIGRGILDSAWQGYNATLLAYGQTGSGKSYSMIGYGANKGIIPRVCEELFQAIEKQKESLEAQVMFSMLEIYNEQIRDLLSRTKAPGGLRVREDQRLGFFVEGLKWVPCEDSVQIEKLVEQGSKIRMTASTNMNASSSRSHMLIAIRFKQVFLDTALTKQSSINMVDLAGSERQRSSGSEGDRLREGSRVNLSLTNLGNVISALADLAMGKKVLHIPYRDSVLTKLLQSALGGNSRTTLIAALSPADICYEETLSTLRYAERAKKVRNRAVINTCPLVRASRAENALLLGFGGAGAAEHSACFWAEQQLGTWGTWAQLLEQARREWEQQYMALAQEQQMVKILPHLLNVNEDPQLTGVLKFFIHNGSCEVGRAASNAICLQSLGISDKHASFTNMDGKVTVAPHITGKVIVNGVPVSSRTKLQHLDRIILGSNSAFLYIGFPSERGAEDLGRFDYDFFQMERAAAEGVSVDMLGTASPGDDQADPSILAVFQDYIKLMPLVVEANQMSEELKKGLKMELKVKNLASSDSRGCDLQKEVMVKVTKQGTHEVWIWSKAKFINRKFLMEELYQRFLESRDSHVAQEDDPFWDPVEVLHLGSAHVWLQSLAHRMMLEEQVEFLNCEGLEEAVLHIQITPCSPEGWAHGEEDTVIDPLELLGKRIDFQIHIVQCLGVKWLKEDATRGIQLGYKVYDLPNTLYTKPVWQSVNPRVEESVHFAALGVSREFLNYLLTNALVVDLWGLQEGCAHLGVSQPDVLFTGEGYIMVDTKTFSSVKDITSNQVPELYQKLLKLEQETELLRDINRALRGENVYLKAALENAGSAPQGERRYHKPDNPEGATVTAAGEAKQMCAQRASSDSQLARALKVFYGGMSVARGQLLRLRQCRPPEDDQMLRPFVHQQSQMLKDLEDLLESSLQKLKSDVAFIVKKKKEYLLPRGR.

The 348-residue stretch at 16 to 363 (SVRVAVRVRP…LRYAERAKKV (348 aa)) folds into the Kinesin motor domain. Position 119–126 (119–126 (GQTGSGKS)) interacts with ATP. An FHA domain is found at 465–528 (CEVGRAASNA…LQHLDRIILG (64 aa)). 2 coiled-coil regions span residues 875–904 (NQVP…LRGE) and 994–1027 (HQQS…KKKE).

It belongs to the TRAFAC class myosin-kinesin ATPase superfamily. Kinesin family.

The protein resides in the mitochondrion membrane. Its function is as follows. Microtubule-dependent motor protein required for mitochondrion morphology and transport of mitochondria in neuronal cells. The protein is Kinesin-like protein KIF28 of Rattus norvegicus (Rat).